The following is a 141-amino-acid chain: Large ribosomal subunit protein uL11 (141 aa).

Belongs to the universal ribosomal protein uL11 family. As to quaternary structure, part of the ribosomal stalk of the 50S ribosomal subunit. Interacts with L10 and the large rRNA to form the base of the stalk. L10 forms an elongated spine to which L12 dimers bind in a sequential fashion forming a multimeric L10(L12)X complex. One or more lysine residues are methylated.

Functionally, forms part of the ribosomal stalk which helps the ribosome interact with GTP-bound translation factors. This Helicobacter pylori (strain P12) protein is Large ribosomal subunit protein uL11.